Reading from the N-terminus, the 115-residue chain is Envelope glycoprotein N (115 aa).

The N-terminal stretch at 1–27 (MWLLRPAGSNFIVALIVLACAGPLTCS) is a signal peptide. Topologically, residues 28–77 (AQLDAGILNPWGSAGHNDAVMPGMFANSESDERFYSPHCSSRGLPLVNES) are virion surface. The helical transmembrane segment at 78–98 (MASVIFFLSLAMVCVAIVAIL) threads the bilayer. Over 99–115 (YNCCFNSFKNSVINSRW) the chain is Intravirion.

Belongs to the herpesviridae glycoprotein N family. Interacts (via N-terminus) with gM (via N-terminus). The gM-gN heterodimer forms the gCII complex.

It is found in the virion membrane. Its subcellular location is the host membrane. The protein localises to the host Golgi apparatus. It localises to the host trans-Golgi network. Its function is as follows. Envelope glycoprotein necessary for proper maturation of gM and modulation of its membrane fusion activity. Also plays a critical role in virion morphogenesis. This chain is Envelope glycoprotein N, found in Psittacid herpesvirus 1 (isolate Amazon parrot/-/97-0001/1997) (PsHV-1).